A 242-amino-acid polypeptide reads, in one-letter code: Ribonuclease PH (242 aa).

Phosphate is bound by residues Arg90 and 128-130; that span reads GTR.

It belongs to the RNase PH family. In terms of assembly, homohexameric ring arranged as a trimer of dimers.

The enzyme catalyses tRNA(n+1) + phosphate = tRNA(n) + a ribonucleoside 5'-diphosphate. In terms of biological role, phosphorolytic 3'-5' exoribonuclease that plays an important role in tRNA 3'-end maturation. Removes nucleotide residues following the 3'-CCA terminus of tRNAs; can also add nucleotides to the ends of RNA molecules by using nucleoside diphosphates as substrates, but this may not be physiologically important. Probably plays a role in initiation of 16S rRNA degradation (leading to ribosome degradation) during starvation. This chain is Ribonuclease PH, found in Nocardioides sp. (strain ATCC BAA-499 / JS614).